Reading from the N-terminus, the 431-residue chain is Glutamate-1-semialdehyde 2,1-aminomutase (431 aa).

Position 269 is an N6-(pyridoxal phosphate)lysine (Lys269).

This sequence belongs to the class-III pyridoxal-phosphate-dependent aminotransferase family. HemL subfamily. In terms of assembly, homodimer. It depends on pyridoxal 5'-phosphate as a cofactor.

The protein resides in the cytoplasm. It carries out the reaction (S)-4-amino-5-oxopentanoate = 5-aminolevulinate. It participates in porphyrin-containing compound metabolism; protoporphyrin-IX biosynthesis; 5-aminolevulinate from L-glutamyl-tRNA(Glu): step 2/2. It functions in the pathway porphyrin-containing compound metabolism; chlorophyll biosynthesis. The chain is Glutamate-1-semialdehyde 2,1-aminomutase from Prosthecochloris aestuarii (strain DSM 271 / SK 413).